Here is a 275-residue protein sequence, read N- to C-terminus: MLDIFKAIILGIIEGVTEFLPISSTGHLYLADYIIKLDQPTSFINMFMVVIQLGAILSVIVIYFNKLNPFAPSKSKREKGQTWQIWFKVIAAVLPSIIIGLPLNDWLEENMTSWQVISATLIIYGILFIVLENYYAKRQPSLTDLNKMSNKTALLIGCFQVLSMIPGTSRSGATILGAMLIGSSRYVATEFSFFLAIPTMFGASLLKLVKFFKAGHVFVGNQLAILLVGMVVSFIVAYLSIKFLLKYVQTHDFKPFGWYRIVLGIIVTICGLVFA.

8 helical membrane-spanning segments follow: residues 2-22 (LDIF…FLPI), 43-63 (FINM…IVIY), 83-103 (WQIW…GLPL), 111-131 (MTSW…FIVL), 161-181 (VLSM…AMLI), 186-206 (YVAT…ASLL), 225-245 (ILLV…KFLL), and 255-275 (PFGW…LVFA).

It belongs to the UppP family.

Its subcellular location is the cell membrane. The enzyme catalyses di-trans,octa-cis-undecaprenyl diphosphate + H2O = di-trans,octa-cis-undecaprenyl phosphate + phosphate + H(+). Catalyzes the dephosphorylation of undecaprenyl diphosphate (UPP). Confers resistance to bacitracin. The polypeptide is Undecaprenyl-diphosphatase (Lactobacillus delbrueckii subsp. bulgaricus (strain ATCC 11842 / DSM 20081 / BCRC 10696 / JCM 1002 / NBRC 13953 / NCIMB 11778 / NCTC 12712 / WDCM 00102 / Lb 14)).